A 98-amino-acid chain; its full sequence is Integration host factor subunit beta (98 aa).

This sequence belongs to the bacterial histone-like protein family. As to quaternary structure, heterodimer of an alpha and a beta chain.

Functionally, this protein is one of the two subunits of integration host factor, a specific DNA-binding protein that functions in genetic recombination as well as in transcriptional and translational control. This Pseudomonas entomophila (strain L48) protein is Integration host factor subunit beta.